Here is a 71-residue protein sequence, read N- to C-terminus: Vitellogenin-B1 (71 aa).

The N-terminal stretch at 1–15 (MRGIILAQLLALAGS) is a signal peptide. In terms of domain architecture, Vitellogenin spans 24–71 (FSESKPYVYNYEGIILNGIPENGLARSGIKLNCKAEISGYAQRSYMLK).

Produced by the liver, secreted into the blood and then sequestered by receptor mediated endocytosis into growing oocytes, where it is generally cleaved, giving rise to the respective yolk components.

In terms of biological role, precursor of the major egg-yolk proteins that are sources of nutrients during early development of oviparous organisms. This Xenopus laevis (African clawed frog) protein is Vitellogenin-B1.